A 483-amino-acid chain; its full sequence is Glutamate--tRNA ligase (483 aa).

Residues P11–N21 carry the 'HIGH' region motif. Zn(2+) contacts are provided by C108, C110, C135, and H137. The 'KMSKS' region signature appears at K252–R256. K255 lines the ATP pocket.

Belongs to the class-I aminoacyl-tRNA synthetase family. Glutamate--tRNA ligase type 1 subfamily. As to quaternary structure, monomer. Zn(2+) is required as a cofactor.

The protein resides in the cytoplasm. It catalyses the reaction tRNA(Glu) + L-glutamate + ATP = L-glutamyl-tRNA(Glu) + AMP + diphosphate. Functionally, catalyzes the attachment of glutamate to tRNA(Glu) in a two-step reaction: glutamate is first activated by ATP to form Glu-AMP and then transferred to the acceptor end of tRNA(Glu). The chain is Glutamate--tRNA ligase from Bacillus pumilus (strain SAFR-032).